The chain runs to 185 residues: Calcium and integrin-binding family member 4 (185 aa).

3 EF-hand domains span residues 62 to 95 (RVNP…FSEQ), 97 to 132 (CPSL…LLKS), and 138 to 174 (DLLM…SPDF). The Ca(2+) site is built by Asp110, Asn112, Asn114, and Asp121.

Interacts with ITGA2B (via C-terminus cytoplasmic tail region); the interaction is stabilized/increased in a calcium- and magnesium-dependent manner. Expressed weakly in megakaryocytes and endothelial cells.

The sequence is that of Calcium and integrin-binding family member 4 (Cib4) from Mus musculus (Mouse).